The primary structure comprises 250 residues: Triosephosphate isomerase (250 aa).

A substrate-binding site is contributed by 8 to 10; the sequence is NWK. The Electrophile role is filled by His-93. Glu-165 (proton acceptor) is an active-site residue. Gly-171 and Ser-211 together coordinate substrate.

It belongs to the triosephosphate isomerase family. In terms of assembly, homodimer.

It is found in the cytoplasm. The catalysed reaction is D-glyceraldehyde 3-phosphate = dihydroxyacetone phosphate. It participates in carbohydrate biosynthesis; gluconeogenesis. It functions in the pathway carbohydrate degradation; glycolysis; D-glyceraldehyde 3-phosphate from glycerone phosphate: step 1/1. Functionally, involved in the gluconeogenesis. Catalyzes stereospecifically the conversion of dihydroxyacetone phosphate (DHAP) to D-glyceraldehyde-3-phosphate (G3P). The protein is Triosephosphate isomerase of Malacoplasma penetrans (strain HF-2) (Mycoplasma penetrans).